The following is a 716-amino-acid chain: Translation initiation factor IF-2 (716 aa).

Positions F50–I137 are disordered. Low complexity predominate over residues N92–N101. Residues K102–N118 show a composition bias toward basic residues. Residues K125 to I137 show a composition bias toward basic and acidic residues. A tr-type G domain is found at I217 to K386. Residues G226 to T233 are G1. G226–T233 is a binding site for GTP. The G2 stretch occupies residues G251–H255. Residues D272 to G275 are G3. Residues D272–H276 and N326–D329 contribute to the GTP site. The G4 stretch occupies residues N326 to D329. The interval S362–L364 is G5.

The protein belongs to the TRAFAC class translation factor GTPase superfamily. Classic translation factor GTPase family. IF-2 subfamily.

It localises to the cytoplasm. One of the essential components for the initiation of protein synthesis. Protects formylmethionyl-tRNA from spontaneous hydrolysis and promotes its binding to the 30S ribosomal subunits. Also involved in the hydrolysis of GTP during the formation of the 70S ribosomal complex. The sequence is that of Translation initiation factor IF-2 from Bacillus licheniformis (strain ATCC 14580 / DSM 13 / JCM 2505 / CCUG 7422 / NBRC 12200 / NCIMB 9375 / NCTC 10341 / NRRL NRS-1264 / Gibson 46).